The sequence spans 371 residues: tRNA-specific 2-thiouridylase MnmA (371 aa).

ATP-binding positions include 12-19 (GMSGGVDS) and methionine 38. Residues 98–100 (NPD) form an interaction with target base in tRNA region. The Nucleophile role is filled by cysteine 103. A disulfide bond links cysteine 103 and cysteine 200. Glycine 128 contacts ATP. An interaction with tRNA region spans residues 150 to 152 (KDQ). Cysteine 200 acts as the Cysteine persulfide intermediate in catalysis. Residues 312-313 (RY) are interaction with tRNA.

Belongs to the MnmA/TRMU family. Interacts with TusE.

It is found in the cytoplasm. It catalyses the reaction S-sulfanyl-L-cysteinyl-[protein] + uridine(34) in tRNA + AH2 + ATP = 2-thiouridine(34) in tRNA + L-cysteinyl-[protein] + A + AMP + diphosphate + H(+). Functionally, catalyzes the 2-thiolation of uridine at the wobble position (U34) of tRNA(Lys), tRNA(Glu) and tRNA(Gln), leading to the formation of s(2)U34, the first step of tRNA-mnm(5)s(2)U34 synthesis. Sulfur is provided by IscS, via a sulfur-relay system. Binds ATP and its substrate tRNAs. The protein is tRNA-specific 2-thiouridylase MnmA of Yersinia pseudotuberculosis serotype O:1b (strain IP 31758).